The sequence spans 566 residues: Glucose-6-phosphate isomerase (566 aa).

E374 functions as the Proton donor in the catalytic mechanism. Active-site residues include H405 and K529.

Belongs to the GPI family.

It is found in the cytoplasm. The enzyme catalyses alpha-D-glucose 6-phosphate = beta-D-fructose 6-phosphate. It functions in the pathway carbohydrate biosynthesis; gluconeogenesis. It participates in carbohydrate degradation; glycolysis; D-glyceraldehyde 3-phosphate and glycerone phosphate from D-glucose: step 2/4. In terms of biological role, catalyzes the reversible isomerization of glucose-6-phosphate to fructose-6-phosphate. This Bifidobacterium longum (strain NCC 2705) protein is Glucose-6-phosphate isomerase.